The chain runs to 472 residues: 3-isopropylmalate dehydratase large subunit (472 aa).

[4Fe-4S] cluster contacts are provided by cysteine 353, cysteine 414, and cysteine 417.

Belongs to the aconitase/IPM isomerase family. LeuC type 1 subfamily. Heterodimer of LeuC and LeuD. [4Fe-4S] cluster serves as cofactor.

It carries out the reaction (2R,3S)-3-isopropylmalate = (2S)-2-isopropylmalate. It participates in amino-acid biosynthesis; L-leucine biosynthesis; L-leucine from 3-methyl-2-oxobutanoate: step 2/4. Its function is as follows. Catalyzes the isomerization between 2-isopropylmalate and 3-isopropylmalate, via the formation of 2-isopropylmaleate. The chain is 3-isopropylmalate dehydratase large subunit from Acinetobacter baumannii (strain AB0057).